The following is a 255-amino-acid chain: tRNA (adenine(58)-N(1))-methyltransferase TrmI (255 aa).

Residues 104–107 (SGGL), glutamate 125, histidine 130, glutamate 155, and aspartate 170 each bind S-adenosyl-L-methionine.

The protein belongs to the class I-like SAM-binding methyltransferase superfamily. TRM61 family. In terms of assembly, homotetramer composed of a dimer of dimers.

It catalyses the reaction adenosine(58) in tRNA + S-adenosyl-L-methionine = N(1)-methyladenosine(58) in tRNA + S-adenosyl-L-homocysteine + H(+). Catalyzes the S-adenosyl-L-methionine-dependent formation of N(1)-methyladenine at position 58 (m1A58) in tRNA. The chain is tRNA (adenine(58)-N(1))-methyltransferase TrmI (trmI) from Thermus thermophilus (strain ATCC 27634 / DSM 579 / HB8).